The following is a 296-amino-acid chain: Regulatory protein PchR (296 aa).

The region spanning 201–296 (HAARDLLVGA…RYGISPSEIR (96 aa)) is the HTH araC/xylS-type domain. 2 consecutive DNA-binding regions (H-T-H motif) follow at residues 218–239 (DTLASRVGMNPRKLTAGFRKVF) and 266–288 (VSTVAYRVGYSPAHFSIAFRKRY).

Its function is as follows. Positive activator of the genes for pyochelin and ferripyochelin receptors. The protein is Regulatory protein PchR (pchR) of Pseudomonas aeruginosa (strain ATCC 15692 / DSM 22644 / CIP 104116 / JCM 14847 / LMG 12228 / 1C / PRS 101 / PAO1).